The sequence spans 246 residues: Sensory transduction protein LytT (246 aa).

Positions 3–117 (KVLVVDDEML…RIVQTLKKYK (115 aa)) constitute a Response regulatory domain. The HTH LytTR-type domain maps to 142–246 (LALPIEESIV…AKELKKLLRI (105 aa)).

Post-translationally, phosphorylated by LytS.

Its subcellular location is the cytoplasm. In terms of biological role, member of the two-component regulatory system LytS/LytT that probably regulates genes involved in cell wall metabolism. The polypeptide is Sensory transduction protein LytT (lytT) (Bacillus cereus (strain ATCC 14579 / DSM 31 / CCUG 7414 / JCM 2152 / NBRC 15305 / NCIMB 9373 / NCTC 2599 / NRRL B-3711)).